Reading from the N-terminus, the 427-residue chain is Enolase (427 aa).

Q163 is a (2R)-2-phosphoglycerate binding site. E205 acts as the Proton donor in catalysis. Mg(2+)-binding residues include D242, E285, and D312. K337, R366, S367, and K388 together coordinate (2R)-2-phosphoglycerate. K337 (proton acceptor) is an active-site residue.

The protein belongs to the enolase family. The cofactor is Mg(2+).

The protein resides in the cytoplasm. It is found in the secreted. It localises to the cell surface. The catalysed reaction is (2R)-2-phosphoglycerate = phosphoenolpyruvate + H2O. Its pathway is carbohydrate degradation; glycolysis; pyruvate from D-glyceraldehyde 3-phosphate: step 4/5. In terms of biological role, catalyzes the reversible conversion of 2-phosphoglycerate (2-PG) into phosphoenolpyruvate (PEP). It is essential for the degradation of carbohydrates via glycolysis. This is Enolase from Variovorax paradoxus (strain S110).